Consider the following 366-residue polypeptide: Ribosomal RNA large subunit methyltransferase M (366 aa).

S-adenosyl-L-methionine contacts are provided by residues serine 188, 221–224 (CPGG), aspartate 240, aspartate 260, and aspartate 277. Residue lysine 306 is the Proton acceptor of the active site.

This sequence belongs to the class I-like SAM-binding methyltransferase superfamily. RNA methyltransferase RlmE family. RlmM subfamily. As to quaternary structure, monomer.

The protein resides in the cytoplasm. It catalyses the reaction cytidine(2498) in 23S rRNA + S-adenosyl-L-methionine = 2'-O-methylcytidine(2498) in 23S rRNA + S-adenosyl-L-homocysteine + H(+). In terms of biological role, catalyzes the 2'-O-methylation at nucleotide C2498 in 23S rRNA. The polypeptide is Ribosomal RNA large subunit methyltransferase M (Shigella boydii serotype 4 (strain Sb227)).